A 226-amino-acid chain; its full sequence is Urease accessory protein UreE (226 aa).

Residues Pro192–His226 are disordered. Residues Ser204–His226 show a composition bias toward basic and acidic residues.

This sequence belongs to the UreE family.

Its subcellular location is the cytoplasm. Its function is as follows. Involved in urease metallocenter assembly. Binds nickel. Probably functions as a nickel donor during metallocenter assembly. This is Urease accessory protein UreE from Yersinia intermedia.